The primary structure comprises 183 residues: Hypoxanthine-guanine-xanthine phosphoribosyltransferase (183 aa).

GMP contacts are provided by residues 102-110, lysine 134, and aspartate 163; that span reads EDIIDTGLT. Aspartate 106 functions as the Proton acceptor in the catalytic mechanism. Aspartate 163 lines the Mg(2+) pocket.

In terms of assembly, homodimer. The cofactor is Mg(2+).

The protein resides in the cytoplasm. The enzyme catalyses IMP + diphosphate = hypoxanthine + 5-phospho-alpha-D-ribose 1-diphosphate. The catalysed reaction is GMP + diphosphate = guanine + 5-phospho-alpha-D-ribose 1-diphosphate. It catalyses the reaction XMP + diphosphate = xanthine + 5-phospho-alpha-D-ribose 1-diphosphate. The protein operates within purine metabolism; GMP biosynthesis via salvage pathway; GMP from guanine: step 1/1. It functions in the pathway purine metabolism; IMP biosynthesis via salvage pathway; IMP from hypoxanthine: step 1/1. It participates in purine metabolism; XMP biosynthesis via salvage pathway; XMP from xanthine: step 1/1. Its function is as follows. Essential in nucleic acid metabolism of T.foetus because the parasite is unable to synthesize purine nucleotides de novo and relies on the HGXPRTase activities for its purine requirements by salvaging purine bases from the host. Works with guanine, hypoxanthine and xanthine. The protein is Hypoxanthine-guanine-xanthine phosphoribosyltransferase (HPT) of Tritrichomonas foetus (Trichomonas foetus).